The sequence spans 920 residues: Isoleucine--tRNA ligase (920 aa).

Positions 58–68 (PYANGHLHLGH) match the 'HIGH' region motif. Glu569 provides a ligand contact to L-isoleucyl-5'-AMP. The 'KMSKS' region motif lies at 610–614 (KMSKS). Lys613 is an ATP binding site. Zn(2+)-binding residues include Cys895, Cys898, Cys910, and Cys913.

Belongs to the class-I aminoacyl-tRNA synthetase family. IleS type 1 subfamily. In terms of assembly, monomer. The cofactor is Zn(2+).

The protein localises to the cytoplasm. The catalysed reaction is tRNA(Ile) + L-isoleucine + ATP = L-isoleucyl-tRNA(Ile) + AMP + diphosphate. Catalyzes the attachment of isoleucine to tRNA(Ile). As IleRS can inadvertently accommodate and process structurally similar amino acids such as valine, to avoid such errors it has two additional distinct tRNA(Ile)-dependent editing activities. One activity is designated as 'pretransfer' editing and involves the hydrolysis of activated Val-AMP. The other activity is designated 'posttransfer' editing and involves deacylation of mischarged Val-tRNA(Ile). In Helicobacter pylori (strain ATCC 700392 / 26695) (Campylobacter pylori), this protein is Isoleucine--tRNA ligase.